Here is a 93-residue protein sequence, read N- to C-terminus: CRISPR-associated endoribonuclease Cas2 2 (93 aa).

Position 9 (Asp-9) interacts with Mg(2+).

The protein belongs to the CRISPR-associated endoribonuclease Cas2 protein family. Homodimer, forms a heterotetramer with a Cas1 homodimer. Requires Mg(2+) as cofactor.

Functionally, CRISPR (clustered regularly interspaced short palindromic repeat), is an adaptive immune system that provides protection against mobile genetic elements (viruses, transposable elements and conjugative plasmids). CRISPR clusters contain sequences complementary to antecedent mobile elements and target invading nucleic acids. CRISPR clusters are transcribed and processed into CRISPR RNA (crRNA). Functions as a ssRNA-specific endoribonuclease. Involved in the integration of spacer DNA into the CRISPR cassette. The chain is CRISPR-associated endoribonuclease Cas2 2 from Synechocystis sp. (strain ATCC 27184 / PCC 6803 / Kazusa).